Consider the following 192-residue polypeptide: Signal peptidase complex catalytic subunit SEC11C (192 aa).

Topologically, residues 2–28 (VRAGAVGTHLPASGLDIFGDLRKMNKR) are cytoplasmic. A helical; Signal-anchor for type II membrane protein membrane pass occupies residues 29–48 (QLYYQVLNFAMIVSSALMIW). The Lumenal portion of the chain corresponds to 49–192 (KGLIVLTGSE…GAYVLLKRES (144 aa)). Active-site charge relay system residues include Ser-68, His-108, and Asp-134. A C-terminal short (CTS) helix region spans residues 177-188 (ALLAVMGAYVLL).

The protein belongs to the peptidase S26B family. In terms of assembly, component of the signal peptidase complex paralog C (SPC-C) composed of a catalytic subunit SEC11C and three accessory subunits SPCS1, SPCS2 and SPCS3. Within the complex, interacts with SPCS2 and SPCS3. The complex induces a local thinning of the ER membrane which is used to measure the length of the signal peptide (SP) h-region of protein substrates. This ensures the selectivity of the complex towards h-regions shorter than 18-20 amino acids. May undergo processing at the N-terminus.

It is found in the endoplasmic reticulum membrane. It carries out the reaction Cleavage of hydrophobic, N-terminal signal or leader sequences from secreted and periplasmic proteins.. Catalytic component of the signal peptidase complex (SPC) which catalyzes the cleavage of N-terminal signal sequences from nascent proteins as they are translocated into the lumen of the endoplasmic reticulum. Specifically cleaves N-terminal signal peptides that contain a hydrophobic alpha-helix (h-region) shorter than 18-20 amino acids. This is Signal peptidase complex catalytic subunit SEC11C (SEC11C) from Canis lupus familiaris (Dog).